We begin with the raw amino-acid sequence, 198 residues long: Glycerol-3-phosphate acyltransferase (198 aa).

Helical transmembrane passes span Thr4–Gly24, Leu71–Gly91, Leu113–Phe133, and Val147–Leu167.

Belongs to the PlsY family. Probably interacts with PlsX.

Its subcellular location is the cell membrane. The enzyme catalyses an acyl phosphate + sn-glycerol 3-phosphate = a 1-acyl-sn-glycero-3-phosphate + phosphate. Its pathway is lipid metabolism; phospholipid metabolism. Functionally, catalyzes the transfer of an acyl group from acyl-phosphate (acyl-PO(4)) to glycerol-3-phosphate (G3P) to form lysophosphatidic acid (LPA). This enzyme utilizes acyl-phosphate as fatty acyl donor, but not acyl-CoA or acyl-ACP. The polypeptide is Glycerol-3-phosphate acyltransferase (Bacillus cereus (strain G9842)).